Consider the following 326-residue polypeptide: Palmitoyltransferase ERF2 (326 aa).

At 1-62 the chain is on the cytoplasmic side; it reads MKGNPSTHEV…RLRAVKTARP (62 aa). The chain crosses the membrane as a helical span at residues 63–83; sequence FSLVVLFLILSPMVLFSVFEA. Residues 84-90 are Lumenal-facing; that stretch reads HRLWHTR. The chain crosses the membrane as a helical span at residues 91–111; that stretch reads YGYKALVVLFYYAWAWSLLSF. At 112 to 202 the chain is on the cytoplasmic side; that stretch reads TKTATSDPGV…NCVGQRNYRY (91 aa). The DHHC domain occupies 158 to 208; the sequence is KYCHTCKIWRPPRASHCSVCECCVLTHDHHCIWVNNCVGQRNYRYFLAFLL. The S-palmitoyl cysteine intermediate role is filled by C188. Residues 203–223 traverse the membrane as a helical segment; it reads FLAFLLSSTLACALLIANCAL. Over 224-241 the chain is Lumenal; the sequence is HLHRALHEGIRVSHRPLP. The chain crosses the membrane as a helical span at residues 242–262; the sequence is VAVLLCVYAAVLCVYPVILLG. The Cytoplasmic portion of the chain corresponds to 263 to 326; sequence YHVAMSGTQQ…GPRSCNYRYR (64 aa).

The protein belongs to the DHHC palmitoyltransferase family. ERF2/ZDHHC9 subfamily. As to quaternary structure, interacts with ERF4. Autopalmitoylated.

It localises to the endoplasmic reticulum membrane. The catalysed reaction is L-cysteinyl-[protein] + hexadecanoyl-CoA = S-hexadecanoyl-L-cysteinyl-[protein] + CoA. Its function is as follows. The ERF2-ERF4 complex is a palmitoyltransferase specific for Ras proteins. The protein is Palmitoyltransferase ERF2 (ERF2) of Candida glabrata (strain ATCC 2001 / BCRC 20586 / JCM 3761 / NBRC 0622 / NRRL Y-65 / CBS 138) (Yeast).